The primary structure comprises 657 residues: Probable intron-encoded endonuclease aI2 (657 aa).

The COX1 exons 1 to 2 encoded stretch occupies residues 1–245; the sequence is MKQMSYVTRW…TYEHLFWFFG (245 aa). The next 6 membrane-spanning stretches (helical) occupy residues 19–39, 69–89, 103–123, 152–172, 188–208, and 269–289; these read IGMT…GMSV, LLMM…NFFL, LNNI…CSVL, AMFA…NFMV, PLFA…LPVL, and MYFI…ANMV. The interval 246–657 is COX1 intron 2 encoded; that stretch reads QWWPTNYVNN…KFENKWNKKF (412 aa).

It in the C-terminal section; belongs to the LAGLIDADG endonuclease family. The protein in the N-terminal section; belongs to the heme-copper respiratory oxidase family. Post-translationally, the mature protein may arise from proteolytic cleavage of an in-frame translation of COX1 exons 1 and 2 plus intron 2, containing the aI2 open reading frame.

Its subcellular location is the mitochondrion. It is found in the membrane. Functionally, mitochondrial DNA endonuclease involved in intron homing. The polypeptide is Probable intron-encoded endonuclease aI2 (aI2) (Debaryomyces hansenii (strain ATCC 36239 / CBS 767 / BCRC 21394 / JCM 1990 / NBRC 0083 / IGC 2968) (Yeast)).